The following is a 185-amino-acid chain: Elongation factor P (185 aa).

Belongs to the elongation factor P family.

Its subcellular location is the cytoplasm. Its pathway is protein biosynthesis; polypeptide chain elongation. Its function is as follows. Involved in peptide bond synthesis. Stimulates efficient translation and peptide-bond synthesis on native or reconstituted 70S ribosomes in vitro. Probably functions indirectly by altering the affinity of the ribosome for aminoacyl-tRNA, thus increasing their reactivity as acceptors for peptidyl transferase. This Mesomycoplasma hyopneumoniae (strain 232) (Mycoplasma hyopneumoniae) protein is Elongation factor P.